The chain runs to 269 residues: Uncharacterised methyltransferase MT1546 (269 aa).

It belongs to the methyltransferase superfamily.

The protein is Uncharacterised methyltransferase MT1546 of Mycobacterium tuberculosis (strain CDC 1551 / Oshkosh).